A 72-amino-acid chain; its full sequence is NAD(P)H-quinone oxidoreductase subunit O (72 aa).

This sequence belongs to the complex I NdhO subunit family. In terms of assembly, NDH-1 can be composed of about 15 different subunits; different subcomplexes with different compositions have been identified which probably have different functions.

Its subcellular location is the cellular thylakoid membrane. The enzyme catalyses a plastoquinone + NADH + (n+1) H(+)(in) = a plastoquinol + NAD(+) + n H(+)(out). It catalyses the reaction a plastoquinone + NADPH + (n+1) H(+)(in) = a plastoquinol + NADP(+) + n H(+)(out). Functionally, NDH-1 shuttles electrons from an unknown electron donor, via FMN and iron-sulfur (Fe-S) centers, to quinones in the respiratory and/or the photosynthetic chain. The immediate electron acceptor for the enzyme in this species is believed to be plastoquinone. Couples the redox reaction to proton translocation, and thus conserves the redox energy in a proton gradient. Cyanobacterial NDH-1 also plays a role in inorganic carbon-concentration. In Rippkaea orientalis (strain PCC 8801 / RF-1) (Cyanothece sp. (strain PCC 8801)), this protein is NAD(P)H-quinone oxidoreductase subunit O.